A 51-amino-acid polypeptide reads, in one-letter code: uncharacterized protein (51 aa).

This is an uncharacterized protein from Saccharomyces cerevisiae (strain ATCC 204508 / S288c) (Baker's yeast).